A 210-amino-acid polypeptide reads, in one-letter code: Ribosomal RNA large subunit methyltransferase E (210 aa).

The S-adenosyl-L-methionine site is built by G67, W69, D87, D103, and D128. Residue K168 is the Proton acceptor of the active site.

Belongs to the class I-like SAM-binding methyltransferase superfamily. RNA methyltransferase RlmE family.

The protein localises to the cytoplasm. The enzyme catalyses uridine(2552) in 23S rRNA + S-adenosyl-L-methionine = 2'-O-methyluridine(2552) in 23S rRNA + S-adenosyl-L-homocysteine + H(+). Specifically methylates the uridine in position 2552 of 23S rRNA at the 2'-O position of the ribose in the fully assembled 50S ribosomal subunit. This is Ribosomal RNA large subunit methyltransferase E from Psychrobacter sp. (strain PRwf-1).